Reading from the N-terminus, the 85-residue chain is Large ribosomal subunit protein bL31B (85 aa).

It belongs to the bacterial ribosomal protein bL31 family. Type B subfamily. In terms of assembly, part of the 50S ribosomal subunit.

In Serratia proteamaculans (strain 568), this protein is Large ribosomal subunit protein bL31B.